Consider the following 357-residue polypeptide: Glucose-6-phosphatase catalytic subunit 1 (357 aa).

At 1 to 28 (MEEGMNILHDFGIQSTRYLQVNYQDSQD) the chain is on the lumenal side. The helical transmembrane segment at 29–49 (WFILVSVIADLRNAFYVLFPI) threads the bilayer. The Cytoplasmic portion of the chain corresponds to 50–60 (WFHLKETVGIN). Residues 61–81 (LLWVAVVGDWFNLVFKWILFG) traverse the membrane as a helical segment. Topologically, residues 82–117 (QRPYWWVLDTDYYSNSSVPIIKQFPVTCETGPGSPS) are lumenal. Residue Arg83 coordinates substrate. Asn96 carries N-linked (GlcNAc...) asparagine glycosylation. Residues 118–138 (GHAMGAAGVYYVMVTSTLAIF) traverse the membrane as a helical segment. The active-site Proton donor is His119. Residues 139–147 (RGKKKPTYG) lie on the Cytoplasmic side of the membrane. A helical membrane pass occupies residues 148–168 (FRCLNVILWLGFWAVQLNVCL). Over 169–179 (SRIYLAAHFPH) the chain is Lumenal. Position 170 (Arg170) interacts with substrate. His176 functions as the Nucleophile in the catalytic mechanism. A helical membrane pass occupies residues 180–202 (QVVAGVLSGIAVAETFSHIRGIY). Over 203–211 (NASLRKYCL) the chain is Cytoplasmic. Residues 212 to 232 (ITIFLFGFALGFYLLLKGLGV) form a helical membrane-spanning segment. Residues 233 to 254 (DLLWTLEKAKRWCERPEWVHLD) are Lumenal-facing. The chain crosses the membrane as a helical span at residues 255–275 (TTPFASLFKNLGTLLGLGLAL). Residues 276–291 (NSSMYRKSCKGELSKL) are Cytoplasmic-facing. A helical membrane pass occupies residues 292 to 312 (LPFRFACIVASLVLLHLFDSL). The Lumenal segment spans residues 313 to 320 (KPPSQVEL). A helical transmembrane segment spans residues 321-341 (IFYILSFCKSATVPFASVSLI). Over 342–357 (PYCLARILGQTHKKSL) the chain is Cytoplasmic. A Prevents secretion from ER motif is present at residues 354–357 (KKSL).

Belongs to the glucose-6-phosphatase family. In terms of tissue distribution, liver and kidney.

The protein resides in the endoplasmic reticulum membrane. The enzyme catalyses D-glucose 6-phosphate + H2O = D-glucose + phosphate. Its pathway is carbohydrate biosynthesis; gluconeogenesis. In terms of biological role, hydrolyzes glucose-6-phosphate to glucose in the endoplasmic reticulum. Forms with the glucose-6-phosphate transporter (SLC37A4/G6PT) the complex responsible for glucose production in the terminal step of glycogenolysis and gluconeogenesis. Hence, it is the key enzyme in homeostatic regulation of blood glucose levels. The sequence is that of Glucose-6-phosphatase catalytic subunit 1 (G6pc1) from Mus musculus (Mouse).